Reading from the N-terminus, the 448-residue chain is DNA primase DnaG (448 aa).

Residues 186–260 (DSIIVVEGRN…EADFVARAPP (75 aa)) enclose the Toprim domain. The Mg(2+) site is built by glutamate 192, aspartate 234, and aspartate 236. Residues 318–340 (AEVIEEPPEQPPKNEEIREEQSQ) are disordered. Positions 329 to 338 (PKNEEIREEQ) are enriched in basic and acidic residues.

The protein belongs to the archaeal DnaG primase family. In terms of assembly, forms a ternary complex with MCM helicase and DNA. Component of the archaeal exosome complex. Mg(2+) is required as a cofactor.

It carries out the reaction ssDNA + n NTP = ssDNA/pppN(pN)n-1 hybrid + (n-1) diphosphate.. RNA polymerase that catalyzes the synthesis of short RNA molecules used as primers for DNA polymerase during DNA replication. Also part of the exosome, which is a complex involved in RNA degradation. Acts as a poly(A)-binding protein that enhances the interaction between heteromeric, adenine-rich transcripts and the exosome. This chain is DNA primase DnaG, found in Thermoplasma acidophilum (strain ATCC 25905 / DSM 1728 / JCM 9062 / NBRC 15155 / AMRC-C165).